The sequence spans 644 residues: Exoribonuclease 2 (644 aa).

The RNB domain occupies 189-516 (RQDLTALNFV…NHRLLKAVIK (328 aa)). The S1 motif domain maps to 561–643 (NTRFAAEIID…ETRSIIARPA (83 aa)).

The protein belongs to the RNR ribonuclease family. RNase II subfamily.

Its subcellular location is the cytoplasm. It carries out the reaction Exonucleolytic cleavage in the 3'- to 5'-direction to yield nucleoside 5'-phosphates.. Its function is as follows. Involved in mRNA degradation. Hydrolyzes single-stranded polyribonucleotides processively in the 3' to 5' direction. The protein is Exoribonuclease 2 of Salmonella agona (strain SL483).